The following is a 659-amino-acid chain: MEMTEMTSVSLKRGSVAIEDNDSVAPAEEAKRQKVSGCCPTTGQDGIENSSLPSSEKVPGPPETAEQGEKNSEVPSEEEEEEDGLSEEEEEEEEEAESFADMMKHGLTELDVGITKFVSSHQGFSGILKERYSDFVVHEIGRDGRISHLSDLSVPVDEEDPSEDVFTVLTAEEKQRLEELQLFKNKETSVAIEVIEDTKEKRTIIHQAIKSLFPGLETKTEDREGKKYIVAYHAAGKKALANPRKHSWPKSRGSYCHFVLYKENKDTMDAINLLSKYLRVKPNIFSYMGTKDKRAITVQEIAVLKITAQRLAHLNKCLMNFKLGNFSYQKNPLKLGELQGNHFTVVLRNITGTDNQVEQAMNSLKEIGFINYYGMQRFGTTAVPTYQVGRAILQNSWAEVMDLILKPRSGAEKGYLVKCREEWAKSKDPAAALRKLPVKRCVEGQLLRGLSKYGMKNIVSAFGIIPRNNRLMYIHSYQSYVWNNMVSKRIDEYGLKPVPGDLVLKGATATFIEEDDVNNYSIHDVVMPLPGFDVIYPKHKISEAYREMLTADNLDIDNMRHKIRDYSLSGAYRKIIIRPQNVSWEVVAYDDPKIPLFNTDVDNLEGRPPPVFASEGKYRALKMDFSLPPSTYATMAIREVLKMDTSIKNQTQLNTTWLR.

Residue Met-1 is modified to N-acetylmethionine. 2 stretches are compositionally biased toward polar residues: residues 1 to 10 (MEMTEMTSVS) and 39 to 54 (CPTT…SLPS). The interval 1-99 (MEMTEMTSVS…EEEEEEAESF (99 aa)) is disordered. Ser-10 bears the Phosphoserine mark. Over residues 75–98 (PSEEEEEEDGLSEEEEEEEEEAES) the composition is skewed to acidic residues. Ser-125 bears the Phosphoserine mark. Residue Asp-292 is the Nucleophile of the active site. Residues 368–578 (GFINYYGMQR…SGAYRKIIIR (211 aa)) enclose the TRUD domain.

This sequence belongs to the pseudouridine synthase TruD family. In terms of assembly, interacts with SIRT1.

The protein resides in the nucleus. The catalysed reaction is a uridine in tRNA = a pseudouridine in tRNA. The enzyme catalyses uridine(13) in tRNA = pseudouridine(13) in tRNA. It catalyses the reaction a uridine in mRNA = a pseudouridine in mRNA. Functionally, pseudouridylate synthase that catalyzes pseudouridylation of RNAs. Acts as a regulator of protein synthesis in embryonic stem cells by mediating pseudouridylation of RNA fragments derived from tRNAs (tRFs): pseudouridylated tRFs inhibit translation by targeting the translation initiation complex. Also catalyzes pseudouridylation of mRNAs: mediates pseudouridylation of mRNAs with the consensus sequence 5'-UGUAG-3'. Acts as a regulator of pre-mRNA splicing by mediating pseudouridylation of pre-mRNAs at locations associated with alternatively spliced regions. Pseudouridylation of pre-mRNAs near splice sites directly regulates mRNA splicing and mRNA 3'-end processing. In addition to mRNAs and tRNAs, binds other types of RNAs, such as snRNAs, Y RNAs and vault RNAs, suggesting that it can catalyze pseudouridylation of many RNA types. The sequence is that of Pseudouridylate synthase 7 homolog from Bos taurus (Bovine).